Consider the following 490-residue polypeptide: GTPase Der (490 aa).

2 EngA-type G domains span residues Pro3 to Leu166 and Ile203 to Thr376. GTP contacts are provided by residues Gly9 to Ser16, Asp56 to Ile60, Asn118 to Asp121, Gly209 to Ser216, Asp256 to Val260, and Asn321 to Asp324. A KH-like domain is found at Arg377–Glu461.

This sequence belongs to the TRAFAC class TrmE-Era-EngA-EngB-Septin-like GTPase superfamily. EngA (Der) GTPase family. In terms of assembly, associates with the 50S ribosomal subunit.

In terms of biological role, GTPase that plays an essential role in the late steps of ribosome biogenesis. In Escherichia coli O7:K1 (strain IAI39 / ExPEC), this protein is GTPase Der.